The primary structure comprises 404 residues: Mevalonate kinase (404 aa).

Residues Lys-12, Ser-130, and 135–141 (GAGLGSS) contribute to the ATP site. Ser-141 and Glu-184 together coordinate Mg(2+). Residue Asp-195 is the Proton acceptor of the active site.

It belongs to the GHMP kinase family. Mevalonate kinase subfamily. As to quaternary structure, homodimer. Mg(2+) is required as a cofactor.

It localises to the cytoplasm. The protein localises to the nucleus. The catalysed reaction is (R)-mevalonate + ATP = (R)-5-phosphomevalonate + ADP + H(+). The protein operates within isoprenoid biosynthesis; isopentenyl diphosphate biosynthesis via mevalonate pathway; isopentenyl diphosphate from (R)-mevalonate: step 1/3. Its activity is regulated as follows. Farnesyl pyrophosphate and geranyl pyrophosphate inhibit mevalonate kinase by binding competitively at the ATP-binding site. Mevalonate kinase; part of the second module of ergosterol biosynthesis pathway that includes the middle steps of the pathway. Erg12 converts mevalonate into 5-phosphomevalonate. The second module is carried out in the vacuole and involves the formation of farnesyl diphosphate, which is also an important intermediate in the biosynthesis of ubiquinone, dolichol, heme and prenylated proteins. Activity by the mevalonate kinase erg12 first converts mevalonate into 5-phosphomevalonate. 5-phosphomevalonate is then further converted to 5-diphosphomevalonate by the phosphomevalonate kinase erg8. The diphosphomevalonate decarboxylase mvd1 then produces isopentenyl diphosphate. The isopentenyl-diphosphate delta-isomerase idi1 then catalyzes the 1,3-allylic rearrangement of the homoallylic substrate isopentenyl (IPP) to its highly electrophilic allylic isomer, dimethylallyl diphosphate (DMAPP). Finally the farnesyl diphosphate synthase fps1 catalyzes the sequential condensation of isopentenyl pyrophosphate with dimethylallyl pyrophosphate, and then with the resultant geranylpyrophosphate to the ultimate product farnesyl pyrophosphate. In Schizosaccharomyces pombe (strain 972 / ATCC 24843) (Fission yeast), this protein is Mevalonate kinase (erg12).